A 491-amino-acid chain; its full sequence is Histamine H1 receptor (491 aa).

Residues 1–30 (MTCPNSSCVFEDKMCQGNKTAPANDAQLTP) are Extracellular-facing. N-linked (GlcNAc...) asparagine glycosylation is found at N5 and N18. The chain crosses the membrane as a helical span at residues 31–51 (LVVVLSTISLVTVGLNLLVLY). The Cytoplasmic portion of the chain corresponds to 52–65 (AVRSERKLHTVGNL). The chain crosses the membrane as a helical span at residues 66-90 (YIVSLSVADLIVGVVVMPMNILYLL). Over 91–98 (MSRWSLGR) the chain is Extracellular. Residues 99–124 (PLCLFWLSMDYVASTASIFSVFILCI) form a helical membrane-spanning segment. C101 and C181 are oxidised to a cystine. Residues D108 and T113 each coordinate histamine. The segment at 108–113 (DYVAST) is important for agonist binding. The Cytoplasmic segment spans residues 125–145 (DRYRSVQQPLKYLRYRTKTRA). T141 and T143 each carry phosphothreonine. A helical membrane pass occupies residues 146-165 (SITILAAWFLSFLWIIPILG). Topologically, residues 166 to 189 (WRHFQPKTPEPREDKCETDFYNVT) are extracellular. Residues 190–212 (WFKVMTAIINFYLPTLLMLWFYA) traverse the membrane as a helical segment. N199 lines the histamine pocket. Over 213-420 (KIYKAVRQHC…MNRERKAAKQ (208 aa)) the chain is Cytoplasmic. S231 carries the phosphoserine modification. Disordered stretches follow at residues 246-297 (QVGA…KEEK) and 360-385 (QSFS…SESS). Over residues 252–262 (PGKESPWEVLK) the composition is skewed to basic and acidic residues. 3 positions are modified to phosphoserine: S384, S400, and S402. A helical transmembrane segment spans residues 421–444 (LGFIMAAFIICWIPYFIFFMVIAF). Positions 428 to 432 (FIICW) are important for agonist binding. Histamine is bound at residue Y435. A disulfide bridge connects residues C445 and C448. At 445-450 (CESCCN) the chain is on the extracellular side. A helical transmembrane segment spans residues 451–473 (QHVHMFTIWLGYINSTLNPLIYP). Residues 474–491 (LCNENFKKTFKKILHIRS) lie on the Cytoplasmic side of the membrane.

It belongs to the G-protein coupled receptor 1 family. Phosphorylation at sites in the second and third cytoplasmic loops independently contribute to agonist-induced receptor down-regulation. Brain, lung, small intestine, uterus, adrenal medulla and spleen.

It is found in the cell membrane. Functionally, G-protein-coupled receptor for histamine, a biogenic amine that functions as an immune modulator and a neurotransmitter. Through the H1 receptor, histamine mediates the contraction of smooth muscles and increases capillary permeability due to contraction of terminal venules. Also mediates neurotransmission in the central nervous system and thereby regulates circadian rhythms, emotional and locomotor activities as well as cognitive functions. This Bos taurus (Bovine) protein is Histamine H1 receptor.